The following is a 207-amino-acid chain: Guanylate kinase (207 aa).

A Guanylate kinase-like domain is found at 5–183 (GTLYIISAPS…ALYELEAIVE (179 aa)). ATP is bound at residue 12-19 (APSGAGKT).

It belongs to the guanylate kinase family.

The protein resides in the cytoplasm. The catalysed reaction is GMP + ATP = GDP + ADP. Essential for recycling GMP and indirectly, cGMP. This is Guanylate kinase from Alcanivorax borkumensis (strain ATCC 700651 / DSM 11573 / NCIMB 13689 / SK2).